A 689-amino-acid polypeptide reads, in one-letter code: 1,4-alpha-glucan-branching enzyme (689 aa).

Residues Trp93 and Lys128 each coordinate (1,4-alpha-D-glucosyl)n. Asp345 serves as the catalytic Nucleophile. Glu400 (proton donor) is an active-site residue.

Belongs to the glycosyl hydrolase 13 family. GlgB subfamily.

The protein localises to the cytoplasm. It catalyses the reaction Transfers a segment of a (1-&gt;4)-alpha-D-glucan chain to a primary hydroxy group in a similar glucan chain.. The protein operates within glycan biosynthesis; glycogen biosynthesis. Glycogen-branching enzyme participates in the glycogen biosynthetic process along with glycogenin and glycogen synthase. Generates alpha-1,6-glucosidic branches from alpha-1,4-linked glucose chains, to increase solubility of the glycogen polymer. This chain is 1,4-alpha-glucan-branching enzyme (gbeA), found in Aspergillus oryzae (strain ATCC 42149 / RIB 40) (Yellow koji mold).